The chain runs to 81 residues: Insect-toxin Cn10 (81 aa).

Positions 1–13 (ITACLVLIGTVCA) are cleaved as a signal peptide. In terms of domain architecture, LCN-type CS-alpha/beta spans 14-79 (KEGYLVNKST…TYPIPGKTCR (66 aa)). 4 disulfide bridges follow: Cys-25/Cys-78, Cys-29/Cys-54, Cys-38/Cys-59, and Cys-42/Cys-61. Residue Lys-81 is a propeptide, removed by a carboxypeptidase.

This sequence belongs to the long (4 C-C) scorpion toxin superfamily. Sodium channel inhibitor family. Beta subfamily. As to expression, expressed by the venom gland.

The protein resides in the secreted. Its function is as follows. Beta toxins bind voltage-independently at site-4 of sodium channels (Nav) and shift the voltage of activation toward more negative potentials thereby affecting sodium channel activation and promoting spontaneous and repetitive firing. Is toxic on insects and crustaceans, but not on mammals. The chain is Insect-toxin Cn10 from Centruroides noxius (Mexican scorpion).